The chain runs to 361 residues: Phenylalanine--tRNA ligase alpha subunit (361 aa).

Glutamate 260 contacts Mg(2+).

The protein belongs to the class-II aminoacyl-tRNA synthetase family. Phe-tRNA synthetase alpha subunit type 1 subfamily. Tetramer of two alpha and two beta subunits. Requires Mg(2+) as cofactor.

It is found in the cytoplasm. The catalysed reaction is tRNA(Phe) + L-phenylalanine + ATP = L-phenylalanyl-tRNA(Phe) + AMP + diphosphate + H(+). The chain is Phenylalanine--tRNA ligase alpha subunit from Bartonella quintana (strain Toulouse) (Rochalimaea quintana).